The primary structure comprises 343 residues: Ribosomal RNA small subunit methyltransferase C (343 aa).

It belongs to the methyltransferase superfamily. RsmC family. As to quaternary structure, monomer.

The protein resides in the cytoplasm. It catalyses the reaction guanosine(1207) in 16S rRNA + S-adenosyl-L-methionine = N(2)-methylguanosine(1207) in 16S rRNA + S-adenosyl-L-homocysteine + H(+). Functionally, specifically methylates the guanine in position 1207 of 16S rRNA in the 30S particle. In Escherichia coli O81 (strain ED1a), this protein is Ribosomal RNA small subunit methyltransferase C.